Consider the following 460-residue polypeptide: tRNA modification GTPase MnmE (460 aa).

Residues arginine 22, glutamate 83, and lysine 122 each coordinate (6S)-5-formyl-5,6,7,8-tetrahydrofolate. The TrmE-type G domain maps to 219–381 (GIKTLIIGRP…LQQTILKKFQ (163 aa)). Asparagine 229 is a K(+) binding site. GTP is bound by residues 229–234 (NVGKSS), 248–254 (SDISGTT), and 273–276 (DTAG). Serine 233 contributes to the Mg(2+) binding site. Serine 248, isoleucine 250, and threonine 253 together coordinate K(+). Threonine 254 contributes to the Mg(2+) binding site. (6S)-5-formyl-5,6,7,8-tetrahydrofolate is bound at residue lysine 460.

This sequence belongs to the TRAFAC class TrmE-Era-EngA-EngB-Septin-like GTPase superfamily. TrmE GTPase family. As to quaternary structure, homodimer. Heterotetramer of two MnmE and two MnmG subunits. K(+) is required as a cofactor.

The protein localises to the cytoplasm. Its function is as follows. Exhibits a very high intrinsic GTPase hydrolysis rate. Involved in the addition of a carboxymethylaminomethyl (cmnm) group at the wobble position (U34) of certain tRNAs, forming tRNA-cmnm(5)s(2)U34. This Aster yellows witches'-broom phytoplasma (strain AYWB) protein is tRNA modification GTPase MnmE.